A 240-amino-acid polypeptide reads, in one-letter code: Adenosylcobinamide-GDP ribazoletransferase (240 aa).

5 consecutive transmembrane segments (helical) span residues Leu-31 to Leu-51, Ala-62 to Ala-81, Ile-109 to Val-129, Ile-133 to Leu-153, and Val-179 to Leu-199.

Belongs to the CobS family. Mg(2+) is required as a cofactor.

The protein localises to the cell inner membrane. It catalyses the reaction alpha-ribazole + adenosylcob(III)inamide-GDP = adenosylcob(III)alamin + GMP + H(+). It carries out the reaction alpha-ribazole 5'-phosphate + adenosylcob(III)inamide-GDP = adenosylcob(III)alamin 5'-phosphate + GMP + H(+). The protein operates within cofactor biosynthesis; adenosylcobalamin biosynthesis; adenosylcobalamin from cob(II)yrinate a,c-diamide: step 7/7. Joins adenosylcobinamide-GDP and alpha-ribazole to generate adenosylcobalamin (Ado-cobalamin). Also synthesizes adenosylcobalamin 5'-phosphate from adenosylcobinamide-GDP and alpha-ribazole 5'-phosphate. This chain is Adenosylcobinamide-GDP ribazoletransferase, found in Pseudomonas putida (strain ATCC 700007 / DSM 6899 / JCM 31910 / BCRC 17059 / LMG 24140 / F1).